Reading from the N-terminus, the 426-residue chain is Phosphoribosylamine--glycine ligase (426 aa).

One can recognise an ATP-grasp domain in the interval 107 to 313; the sequence is KDFMQKYGVK…FLNVINSALN (207 aa). Position 133 to 194 (133 to 194) interacts with ATP; the sequence is LDKISYPVVI…EEFLDGVEIS (62 aa). 2 residues coordinate Mg(2+): Glu-283 and Asn-285.

Belongs to the GARS family. It depends on Mg(2+) as a cofactor. The cofactor is Mn(2+).

The enzyme catalyses 5-phospho-beta-D-ribosylamine + glycine + ATP = N(1)-(5-phospho-beta-D-ribosyl)glycinamide + ADP + phosphate + H(+). Its pathway is purine metabolism; IMP biosynthesis via de novo pathway; N(1)-(5-phospho-D-ribosyl)glycinamide from 5-phospho-alpha-D-ribose 1-diphosphate: step 2/2. The protein is Phosphoribosylamine--glycine ligase of Fusobacterium nucleatum subsp. nucleatum (strain ATCC 25586 / DSM 15643 / BCRC 10681 / CIP 101130 / JCM 8532 / KCTC 2640 / LMG 13131 / VPI 4355).